Reading from the N-terminus, the 404-residue chain is Probable tRNA sulfurtransferase (404 aa).

The THUMP domain occupies 61–166 (EAVSERLKDV…SGYSYIMCDE (106 aa)). ATP contacts are provided by residues 184–185 (LL), 209–210 (HF), arginine 266, glycine 288, and glutamine 297.

The protein belongs to the ThiI family.

The protein localises to the cytoplasm. It carries out the reaction [ThiI sulfur-carrier protein]-S-sulfanyl-L-cysteine + a uridine in tRNA + 2 reduced [2Fe-2S]-[ferredoxin] + ATP + H(+) = [ThiI sulfur-carrier protein]-L-cysteine + a 4-thiouridine in tRNA + 2 oxidized [2Fe-2S]-[ferredoxin] + AMP + diphosphate. The enzyme catalyses [ThiS sulfur-carrier protein]-C-terminal Gly-Gly-AMP + S-sulfanyl-L-cysteinyl-[cysteine desulfurase] + AH2 = [ThiS sulfur-carrier protein]-C-terminal-Gly-aminoethanethioate + L-cysteinyl-[cysteine desulfurase] + A + AMP + 2 H(+). It functions in the pathway cofactor biosynthesis; thiamine diphosphate biosynthesis. In terms of biological role, catalyzes the ATP-dependent transfer of a sulfur to tRNA to produce 4-thiouridine in position 8 of tRNAs, which functions as a near-UV photosensor. Also catalyzes the transfer of sulfur to the sulfur carrier protein ThiS, forming ThiS-thiocarboxylate. This is a step in the synthesis of thiazole, in the thiamine biosynthesis pathway. The sulfur is donated as persulfide by IscS. The sequence is that of Probable tRNA sulfurtransferase from Bacillus cereus (strain ATCC 10987 / NRS 248).